The sequence spans 109 residues: Protein reprimo (109 aa).

2 N-linked (GlcNAc...) asparagine glycosylation sites follow: Asn-7 and Asn-18. A helical membrane pass occupies residues 56-76 (VVQIAVMCVLSLTVVFGIFFL). The residue at position 98 (Ser-98) is a Phosphoserine.

It belongs to the reprimo family.

It localises to the cytoplasm. It is found in the membrane. May be involved in the regulation of p53-dependent G2 arrest of the cell cycle. Seems to induce cell cycle arrest by inhibiting CDK1 activity and nuclear translocation of the CDC2 cyclin B1 complex. This is Protein reprimo (Rprm) from Rattus norvegicus (Rat).